We begin with the raw amino-acid sequence, 119 residues long: Large ribosomal subunit protein eL8 (119 aa).

It belongs to the eukaryotic ribosomal protein eL8 family. In terms of assembly, part of the 50S ribosomal subunit. Probably part of the RNase P complex.

The protein localises to the cytoplasm. Its function is as follows. Multifunctional RNA-binding protein that recognizes the K-turn motif in ribosomal RNA, the RNA component of RNase P, box H/ACA, box C/D and box C'/D' sRNAs. The chain is Large ribosomal subunit protein eL8 from Archaeoglobus fulgidus (strain ATCC 49558 / DSM 4304 / JCM 9628 / NBRC 100126 / VC-16).